We begin with the raw amino-acid sequence, 156 residues long: Arginine repressor (156 aa).

Belongs to the ArgR family.

Its subcellular location is the cytoplasm. It participates in amino-acid biosynthesis; L-arginine biosynthesis [regulation]. Regulates arginine biosynthesis genes. This chain is Arginine repressor, found in Sodalis glossinidius (strain morsitans).